Here is a 412-residue protein sequence, read N- to C-terminus: Serine hydroxymethyltransferase (412 aa).

Residues leucine 117 and glycine 121–leucine 123 contribute to the (6S)-5,6,7,8-tetrahydrofolate site. The residue at position 226 (lysine 226) is an N6-(pyridoxal phosphate)lysine. Serine 349–phenylalanine 351 serves as a coordination point for (6S)-5,6,7,8-tetrahydrofolate.

The protein belongs to the SHMT family. As to quaternary structure, homodimer. The cofactor is pyridoxal 5'-phosphate.

It is found in the cytoplasm. It carries out the reaction (6R)-5,10-methylene-5,6,7,8-tetrahydrofolate + glycine + H2O = (6S)-5,6,7,8-tetrahydrofolate + L-serine. The protein operates within one-carbon metabolism; tetrahydrofolate interconversion. It participates in amino-acid biosynthesis; glycine biosynthesis; glycine from L-serine: step 1/1. In terms of biological role, catalyzes the reversible interconversion of serine and glycine with tetrahydrofolate (THF) serving as the one-carbon carrier. This reaction serves as the major source of one-carbon groups required for the biosynthesis of purines, thymidylate, methionine, and other important biomolecules. Also exhibits THF-independent aldolase activity toward beta-hydroxyamino acids, producing glycine and aldehydes, via a retro-aldol mechanism. The chain is Serine hydroxymethyltransferase from Nitratidesulfovibrio vulgaris (strain ATCC 29579 / DSM 644 / CCUG 34227 / NCIMB 8303 / VKM B-1760 / Hildenborough) (Desulfovibrio vulgaris).